The sequence spans 151 residues: Ribosome maturation factor RimP (151 aa).

This sequence belongs to the RimP family.

The protein localises to the cytoplasm. Required for maturation of 30S ribosomal subunits. The polypeptide is Ribosome maturation factor RimP (Shewanella woodyi (strain ATCC 51908 / MS32)).